Reading from the N-terminus, the 338-residue chain is Envelope glycoprotein K (338 aa).

Residues 1–30 (MLAVRSLQHLTTVIFITAYGLVLAWYIVFG) form the signal peptide. At 31-121 (ASPLHRCIYA…VNCLEALWDT (91 aa)) the chain is on the extracellular side. The interval 31–121 (ASPLHRCIYA…VNCLEALWDT (91 aa)) is involved in fusion. N-linked (GlcNAc...) asparagine; by host glycans are attached at residues Asn48 and Asn58. A helical membrane pass occupies residues 122–140 (QMRLVVVGWFLYLAFVALH). At 141–212 (QRRCMFGVVS…DPVTFLYHRP (72 aa)) the chain is on the cytoplasmic side. The helical transmembrane segment at 213-233 (AIGVIVGCELLLRFVALGLIV) threads the bilayer. Residues 234–243 (GTALISRGAC) lie on the Extracellular side of the membrane. The chain crosses the membrane as a helical span at residues 244-264 (AITHPLFLTITTWCFVSIIAL). Residues 265 to 301 (TELYFILRRGSAPKNAEPAAPRGRSKGWSGVCGRCCS) lie on the Cytoplasmic side of the membrane. The tract at residues 265 to 301 (TELYFILRRGSAPKNAEPAAPRGRSKGWSGVCGRCCS) is interaction with UL20. The chain crosses the membrane as a helical span at residues 302–322 (IILSGIAVRLCYIAVVAGVVL). Topologically, residues 323–338 (VALRYEQEIQRRLFDL) are extracellular.

It belongs to the alphaherpesvirinae glycoprotein K family. Interacts (via UL20 interaction region) with protein UL20 (via N-terminus); this interaction probably plays a role in the coordinate transport of protein UL20 and gK to the trans-Golgi network (TGN), and is required for the cell surface expression of gK. Post-translationally, N-glycosylated.

Its subcellular location is the host cell membrane. The protein resides in the host endosome membrane. It is found in the host Golgi apparatus membrane. Functionally, glycoprotein that probably modulates membrane fusion events during secondary envelopment of cytoplasmic capsids that bud into specific trans-Golgi network (TGN)-derived membranes. Also plays a role, together with gB, in virus-induced cell-to-cell fusion (syncytia formation). Seems to block fusion of virions with infected-cell membranes. The polypeptide is Envelope glycoprotein K (gK) (Human herpesvirus 2 (strain HG52) (HHV-2)).